The following is an 872-amino-acid chain: Alanine--tRNA ligase (872 aa).

Zn(2+) contacts are provided by His567, His571, Cys669, and His673.

This sequence belongs to the class-II aminoacyl-tRNA synthetase family. It depends on Zn(2+) as a cofactor.

The protein resides in the cytoplasm. It carries out the reaction tRNA(Ala) + L-alanine + ATP = L-alanyl-tRNA(Ala) + AMP + diphosphate. Catalyzes the attachment of alanine to tRNA(Ala) in a two-step reaction: alanine is first activated by ATP to form Ala-AMP and then transferred to the acceptor end of tRNA(Ala). Also edits incorrectly charged Ser-tRNA(Ala) and Gly-tRNA(Ala) via its editing domain. This Streptococcus pyogenes serotype M12 (strain MGAS2096) protein is Alanine--tRNA ligase.